Consider the following 342-residue polypeptide: Histidinol-phosphate aminotransferase 2 (342 aa).

At Lys-206 the chain carries N6-(pyridoxal phosphate)lysine.

The protein belongs to the class-II pyridoxal-phosphate-dependent aminotransferase family. Histidinol-phosphate aminotransferase subfamily. It depends on pyridoxal 5'-phosphate as a cofactor.

It carries out the reaction L-histidinol phosphate + 2-oxoglutarate = 3-(imidazol-4-yl)-2-oxopropyl phosphate + L-glutamate. The protein operates within amino-acid biosynthesis; L-histidine biosynthesis; L-histidine from 5-phospho-alpha-D-ribose 1-diphosphate: step 7/9. This chain is Histidinol-phosphate aminotransferase 2 (hisC2), found in Archaeoglobus fulgidus (strain ATCC 49558 / DSM 4304 / JCM 9628 / NBRC 100126 / VC-16).